Here is a 3295-residue protein sequence, read N- to C-terminus: Toxin CdiA (3295 aa).

Positions 33 to 366 (PSSGVGHTQR…GKGNTQLTTA (334 aa)) are two-partner system transport domain (TPS). The helical transmembrane segment at 55–75 (LLIALGCISLSAQAAIVADGS) threads the bilayer. Residues 353 to 1574 (GVLYGKGNTQ…LLVYAKTLTN (1222 aa)) form an FHA-1 region. A disordered region spans residues 1165 to 1185 (PPSSIPPSSTQSSSTQASASP). Positions 1575 to 1796 (RRQILTATTD…LKTDKGDYAP (222 aa)) are receptor binding domain (RBD). Residues 1797–1977 (GPEAALSLAN…GVKPGDLRAN (181 aa)) are YP domain. The interval 1806–1831 (NISPPSSLDATGPRGVPPPSDDLNRT) is disordered. The interval 1998 to 2035 (GAISASNNLQISMAKDITLNNRCGLLQAGNHLQLSTLN) is periplasmic FHA-1 repeat (pFR). The interval 2022-2676 (LLQAGNHLQL…DRDNYDAKQS (655 aa)) is FHA-2. Disordered regions lie at residues 2260 to 2292 (TSQT…EGRS) and 2823 to 2847 (QQNV…FDKE). Over residues 2823–2838 (QQNVDDLSRDTGNANG) the composition is skewed to polar residues. The VENN CT cleavage motif signature appears at 3073–3076 (VENN). Residues 3073–3295 (VENNLLGGNE…QKKDAMEDSK (223 aa)) are CT domain. A disordered region spans residues 3276 to 3295 (SSEFGSSLIQQKKDAMEDSK). The segment covering 3286-3295 (QKKDAMEDSK) has biased composition (basic and acidic residues).

In the N-terminal section; belongs to the CdiA toxin family. Probably interacts with cognate immunity protein CdiI.

Its subcellular location is the membrane. It localises to the target cell. It is found in the target cell cytoplasm. Its function is as follows. Toxic component of a toxin-immunity protein module, which functions as a cellular contact-dependent growth inhibition (CDI) system. CDI modules allow bacteria to communicate with and inhibit the growth of closely related neighboring bacteria in a contact-dependent fashion. CDI is neutralized by its cognate immunity protein CdiI, but not by non-cognate CdiI from other bacteria. Functionally, the CdiA protein is thought to be exported from the cell through the central lumen of CdiB, the other half of its two-partner system (TPS). The TPS domain probably remains associated with CdiB while the FHA-1 domain forms an extended filament with the receptor-binding domain (RBD) at its extremity; in the secretion arrested state the C-terminus of the RBD and YP domains form a hairpin-like structure as the FHA-2, PT and CT domains are periplasmic. The YP domain is probably responsible for this arrest at the point where it re-enters the host cell periplasm. Upon binding to a target cell outer membrane receptor a signal is transmitted to activate secretion. The filament elongates slightly, the rest of CdiA is secreted and the FHA-2 domain becomes stably associated with the target cell's outer membrane where it facilitates entry of the toxic CT domain into the target cell periplasm. From there the toxic CT domain is cleaved and gains access to the target cell cytoplasm via an inner membrane protein. This is Toxin CdiA from Yersinia pestis.